The primary structure comprises 40 residues: Dolichyl-diphosphooligosaccharide--protein glycosyltransferase subunit 4 (40 aa).

Residues 1–4 (MITD) are Lumenal-facing. The helical transmembrane segment at 5–25 (VQLAIFSNVLGVFLFLLVVAY) threads the bilayer. The Cytoplasmic segment spans residues 26 to 40 (HYINANTGKSIIKSK).

It belongs to the OST4 family. Component of the oligosaccharyltransferase (OST) complex.

Its subcellular location is the endoplasmic reticulum membrane. Functionally, subunit of the oligosaccharyl transferase (OST) complex that catalyzes the initial transfer of a defined glycan (Glc(3)Man(9)GlcNAc(2) in eukaryotes) from the lipid carrier dolichol-pyrophosphate to an asparagine residue within an Asn-X-Ser/Thr consensus motif in nascent polypeptide chains, the first step in protein N-glycosylation. N-glycosylation occurs cotranslationally and the complex associates with the Sec61 complex at the channel-forming translocon complex that mediates protein translocation across the endoplasmic reticulum (ER). All subunits are required for a maximal enzyme activity. The chain is Dolichyl-diphosphooligosaccharide--protein glycosyltransferase subunit 4 from Drosophila grimshawi (Hawaiian fruit fly).